A 208-amino-acid polypeptide reads, in one-letter code: N-(5'-phosphoribosyl)anthranilate isomerase (208 aa).

It belongs to the TrpF family.

It catalyses the reaction N-(5-phospho-beta-D-ribosyl)anthranilate = 1-(2-carboxyphenylamino)-1-deoxy-D-ribulose 5-phosphate. Its pathway is amino-acid biosynthesis; L-tryptophan biosynthesis; L-tryptophan from chorismate: step 3/5. This Pyrobaculum aerophilum (strain ATCC 51768 / DSM 7523 / JCM 9630 / CIP 104966 / NBRC 100827 / IM2) protein is N-(5'-phosphoribosyl)anthranilate isomerase (trpF).